We begin with the raw amino-acid sequence, 280 residues long: Phosphatidylglycerol--prolipoprotein diacylglyceryl transferase (280 aa).

The next 4 helical transmembrane spans lie at Leu-26–Ala-46, Phe-71–Tyr-91, Ile-106–Leu-126, and Gly-132–Phe-152. Arg-154 provides a ligand contact to a 1,2-diacyl-sn-glycero-3-phospho-(1'-sn-glycerol). 3 helical membrane passes run Gly-193 to Leu-213, Gly-217 to Phe-237, and Trp-251 to Leu-271.

It belongs to the Lgt family.

The protein resides in the cell inner membrane. The enzyme catalyses L-cysteinyl-[prolipoprotein] + a 1,2-diacyl-sn-glycero-3-phospho-(1'-sn-glycerol) = an S-1,2-diacyl-sn-glyceryl-L-cysteinyl-[prolipoprotein] + sn-glycerol 1-phosphate + H(+). Its pathway is protein modification; lipoprotein biosynthesis (diacylglyceryl transfer). Functionally, catalyzes the transfer of the diacylglyceryl group from phosphatidylglycerol to the sulfhydryl group of the N-terminal cysteine of a prolipoprotein, the first step in the formation of mature lipoproteins. This Agrobacterium fabrum (strain C58 / ATCC 33970) (Agrobacterium tumefaciens (strain C58)) protein is Phosphatidylglycerol--prolipoprotein diacylglyceryl transferase.